Reading from the N-terminus, the 326-residue chain is D-allose transport system permease protein AlsC (326 aa).

Residues 1–18 (MGFTTRVKSEASEKKPFN) are Cytoplasmic-facing. Residues 19–39 (FALFWDKYGTFFILAIIVAIF) form a helical membrane-spanning segment. Topologically, residues 40-70 (GSLSPEYFLTTNNITQIFVQSSVTVLIGMGE) are periplasmic. The helical transmembrane segment at 71–91 (FFAILVAGIDLSVGAILALSG) threads the bilayer. The Cytoplasmic portion of the chain corresponds to 92-101 (MVTAKLMLAG). Residues 102 to 122 (VDPFLAAMIGGVLVGGALGAI) form a helical membrane-spanning segment. Over 123-124 (NG) the chain is Periplasmic. The helical transmembrane segment at 125–145 (CLVNWTGLHPFIITLGTNAIF) threads the bilayer. The Cytoplasmic portion of the chain corresponds to 146–149 (RGIT). Residues 150–170 (LVISDANSVYGFSFDFVNFFA) traverse the membrane as a helical segment. Over 171–172 (AS) the chain is Periplasmic. The chain crosses the membrane as a helical span at residues 173-193 (VIGIPVPVIFSLIVALILWFL). The Cytoplasmic portion of the chain corresponds to 194-221 (TTRMRLGRNIYALGGNKNSAFYSGIDVK). The helical transmembrane segment at 222–242 (FHILVVFIISGVCAGLAGVVS) threads the bilayer. Residues 243 to 252 (TARLGAAEPL) lie on the Periplasmic side of the membrane. A helical membrane pass occupies residues 253–273 (AGMGFETYAIASAIIGGTSFF). Residues 274–278 (GGKGR) lie on the Cytoplasmic side of the membrane. The next 2 membrane-spanning stretches (helical) occupy residues 279-299 (IFSV…LNIL) and 300-320 (QVQT…AVAL). Residues 321–326 (DRLISK) are Cytoplasmic-facing.

This sequence belongs to the binding-protein-dependent transport system permease family. AraH/RbsC subfamily.

The protein resides in the cell inner membrane. In terms of biological role, part of the binding-protein-dependent transport system AlsBAC for D-allose; probably responsible for the translocation of the substrate across the membrane. This Escherichia coli (strain K12) protein is D-allose transport system permease protein AlsC (alsC).